We begin with the raw amino-acid sequence, 2753 residues long: Maltase-glucoamylase (2753 aa).

Residues 1 to 13 are Cytoplasmic-facing; that stretch reads MARKKLKKFTTLE. Residues 14–34 form a helical; Signal-anchor for type II membrane protein membrane-spanning segment; it reads IVLSVLLLVLFIISIVLIVLL. At 35–2753 the chain is on the lumenal side; it reads AKESLKSTAP…FTSLTWISTL (2719 aa). The disordered stretch occupies residues 41-87; the sequence is STAPDPGTTGTPDPGTTGTPDPGTTGTTHARTTGPPDPGTTGTTPVS. The segment covering 44 to 85 has biased composition (low complexity); the sequence is PDPGTTGTPDPGTTGTPDPGTTGTTHARTTGPPDPGTTGTTP. The region spanning 88–134 is the P-type 1 domain; that stretch reads AECPVVNELERINCIPDQPPTKATCDQRGCCWNPQGAVSVPWCYYSK. Cystine bridges form between Cys-90–Cys-118, Cys-101–Cys-117, and Cys-112–Cys-130. A glycan (N-linked (GlcNAc...) asparagine) is linked at Asn-135. Residue Asp-289 coordinates acarbose. Asn-295 carries an N-linked (GlcNAc...) asparagine glycan. A maltase region spans residues 356-737; the sequence is PEQVVQEYLE…FRAHSRGDTV (382 aa). Residue Asp-413 coordinates acarbose. Tyr-416 and Tyr-425 each carry sulfotyrosine. N-linked (GlcNAc...) asparagine glycosylation is found at Asn-457, Asn-458, and Asn-479. Catalysis depends on Asp-529, which acts as the Nucleophile. Glu-532 is an active-site residue. Acarbose is bound by residues Arg-612 and Asp-628. A disulfide bridge connects residues Cys-659 and Cys-670. His-686 is a binding site for acarbose. N-linked (GlcNAc...) asparagine glycosylation is found at Asn-707, Asn-749, Asn-827, Asn-885, Asn-912, Asn-977, Asn-989, and Asn-1255. Positions 954-1000 constitute a P-type 2 domain; that stretch reads WSIKIRDEEKIDCYPDENGASAENCTARGCIWEASNSSGVPFCYFVN. 2 disulfide bridges follow: Cys-966–Cys-983 and Cys-978–Cys-996. The segment at 1221 to 1632 is glucoamylase; that stretch reads TPELVTQQYT…MQKAHTEGVT (412 aa). Position 1282 is a sulfotyrosine (Tyr-1282). 3 N-linked (GlcNAc...) asparagine glycosylation sites follow: Asn-1323, Asn-1364, and Asn-1388. Asp-1420 serves as the catalytic Nucleophile. Residue Glu-1423 is part of the active site. Asp-1526 (proton donor) is an active-site residue. Residues 1850–1896 form the P-type 3 domain; sequence WSIKIRDEEKIDCYPDENGDSAENCTARGCIWEASNSSGVPFCYFVN. Cystine bridges form between Cys-1862–Cys-1879 and Cys-1874–Cys-1892. 4 N-linked (GlcNAc...) asparagine glycosylation sites follow: Asn-2499, Asn-2568, Asn-2738, and Asn-2743.

This sequence belongs to the glycosyl hydrolase 31 family. In terms of assembly, monomer. In terms of processing, N- and O-glycosylated. Does not undergo intracellular or extracellular proteolytic cleavage. Post-translationally, sulfated. As to expression, broadly expressed. Highly expressed in small intestine. Expressed in granulocytes.

It is found in the apical cell membrane. The enzyme catalyses Hydrolysis of terminal, non-reducing (1-&gt;4)-linked alpha-D-glucose residues with release of alpha-D-glucose.. It carries out the reaction D-maltoheptaose + H2O = D-maltohexaose + alpha-D-glucose. It catalyses the reaction D-maltohexaose + H2O = D-maltopentaose + alpha-D-glucose. The catalysed reaction is D-maltopentaose + H2O = D-maltotetraose + alpha-D-glucose. The enzyme catalyses D-maltotetraose + H2O = D-maltotriose + alpha-D-glucose. It carries out the reaction D-maltotriose + H2O = D-maltose + alpha-D-glucose. It catalyses the reaction D-maltose + H2O = alpha-D-glucose + D-glucose. The catalysed reaction is nigerose + H2O = alpha-D-glucose + D-glucose. The enzyme catalyses kojibiose + H2O = alpha-D-glucose + D-glucose. It carries out the reaction isomaltose + H2O = alpha-D-glucose + D-glucose. It catalyses the reaction 6-O-alpha-D-glucopyranosyl-D-fructose + H2O = alpha-D-glucose + D-fructose. It participates in carbohydrate degradation. With respect to regulation, down-regulated at high oligomaltose concentration as it occurs during the mealtime. Down-regulated by anti-diabetic drug acarbose. Alpha-(1,4) exo-glucosidase involved in breakdown of dietary starch oligosaccharides in small intestine. Cleaves the non-reducing alpha-(1,4)-linked glucose residue in linear dextrins with retention of anomeric center stereochemistry. Mainly hydrolyzes short length oligomaltoses having two to seven glucose residues. Can cleave alpha-(1,2), alpha-(1,3) and alpha-(1,6) glycosidic linkages with lower efficiency, whereas beta glycosidic linkages are usually not hydrolyzed. In Homo sapiens (Human), this protein is Maltase-glucoamylase.